The primary structure comprises 404 residues: Odorant receptor 74a (404 aa).

The Cytoplasmic segment spans residues 1–38 (MSFHRYRPRLPGGELAPMPWPVSLYRVLNHVAWPLEAE). The helical transmembrane segment at 39–59 (SGRWTVFLDRLMIFLGFLVFC) threads the bilayer. The Extracellular segment spans residues 60–67 (EHNEVDFH). A helical membrane pass occupies residues 68–88 (YLIANRQDMDNMLTGLPTYLI). Residues 89–141 (LVEMQIRCFQLAWHKDRFRALLQRFYAEIYVSEEMEPHLFASIQRQMLATRVN) lie on the Cytoplasmic side of the membrane. A helical transmembrane segment spans residues 142-162 (STVYLLALLNFFLVPVTNVIY). The Extracellular segment spans residues 163–181 (HRREMLYKQVYPFDNTQLH). The chain crosses the membrane as a helical span at residues 182 to 202 (FFIPLLVLNFWVGFIITSMLF). At 203–274 (GELNVMGELM…QRVEKEFTLR (72 aa)) the chain is on the cytoplasmic side. The chain crosses the membrane as a helical span at residues 275–295 (IFVMFAFSAGLLCALFFKAFT). Residues 296–303 (NPWGNVAY) lie on the Extracellular side of the membrane. A helical transmembrane segment spans residues 304 to 324 (IVWFLAKFMELLALGMLGSIL). Residues 325-380 (LKTTDELGMMYYTADWEQVIHQSDNVGENVKLMKLVTLAIQLNSRPFFITGLNYFR) are Cytoplasmic-facing. A helical transmembrane segment spans residues 381–401 (VSLTAVLKIIQGAFSYFTFLN). The Extracellular portion of the chain corresponds to 402–404 (SMR).

This sequence belongs to the insect chemoreceptor superfamily. Heteromeric odorant receptor channel (TC 1.A.69) family. Or1a subfamily. Interacts with Orco. Complexes exist early in the endomembrane system in olfactory sensory neurons (OSNs), coupling these complexes to the conserved ciliary trafficking pathway.

The protein localises to the cell membrane. In terms of biological role, odorant receptor which mediates acceptance or avoidance behavior, depending on its substrates. The odorant receptor repertoire encodes a large collection of odor stimuli that vary widely in identity, intensity, and duration. May form a complex with Orco to form odorant-sensing units, providing sensitive and prolonged odorant signaling and calcium permeability. Involved in the behavioral responses to octanol, anisole, and 2-heptanone. The polypeptide is Odorant receptor 74a (Or74a) (Drosophila melanogaster (Fruit fly)).